A 332-amino-acid chain; its full sequence is Fructose-1,6-bisphosphatase class 1 (332 aa).

Mg(2+) contacts are provided by glutamate 92, aspartate 113, leucine 115, and aspartate 116. Substrate contacts are provided by residues aspartate 116–serine 119, asparagine 209, tyrosine 242, and lysine 272. Residue glutamate 278 coordinates Mg(2+).

This sequence belongs to the FBPase class 1 family. As to quaternary structure, homotetramer. Requires Mg(2+) as cofactor.

Its subcellular location is the cytoplasm. The enzyme catalyses beta-D-fructose 1,6-bisphosphate + H2O = beta-D-fructose 6-phosphate + phosphate. The protein operates within carbohydrate biosynthesis; Calvin cycle. The protein is Fructose-1,6-bisphosphatase class 1 of Prosthecochloris aestuarii (strain DSM 271 / SK 413).